The primary structure comprises 338 residues: Phenylalanine--tRNA ligase alpha subunit (338 aa).

Residue glutamate 253 participates in Mg(2+) binding.

This sequence belongs to the class-II aminoacyl-tRNA synthetase family. Phe-tRNA synthetase alpha subunit type 1 subfamily. In terms of assembly, tetramer of two alpha and two beta subunits. Mg(2+) serves as cofactor.

It is found in the cytoplasm. It catalyses the reaction tRNA(Phe) + L-phenylalanine + ATP = L-phenylalanyl-tRNA(Phe) + AMP + diphosphate + H(+). The sequence is that of Phenylalanine--tRNA ligase alpha subunit from Gloeobacter violaceus (strain ATCC 29082 / PCC 7421).